The sequence spans 301 residues: Nitric oxide synthase-interacting protein (301 aa).

S36 is subject to Phosphoserine. The interval 55-75 (DPVVTPDGYLYEREAILEYIL) is U-box-like. Positions 78–101 (KKEIARQMKAYEKQRGTRREEQKE) match the Nuclear localization signal motif. At S107 the chain carries Phosphoserine. The disordered stretch occupies residues 132 to 157 (KALSGTSPDDVQPGPSVGPPSKDKDK).

Belongs to the NOSIP family. In terms of assembly, interacts with NOS1 and NOS3. Interacts with PP2A holoenzyme, containing PPP2CA, PPP2CB, PPP2R1A and PPP2R2A subunits. In terms of tissue distribution, expressed in heart, brain and lung. Present in endothelial cells (at protein level).

It localises to the cytoplasm. Its subcellular location is the nucleus. The enzyme catalyses S-ubiquitinyl-[E2 ubiquitin-conjugating enzyme]-L-cysteine + [acceptor protein]-L-lysine = [E2 ubiquitin-conjugating enzyme]-L-cysteine + N(6)-ubiquitinyl-[acceptor protein]-L-lysine.. Functionally, E3 ubiquitin-protein ligase that is essential for proper development of the forebrain, the eye, and the face. Catalyzes monoubiquitination of serine/threonine-protein phosphatase 2A (PP2A) catalytic subunit PPP2CA/PPP2CB. Negatively regulates nitric oxide production by inducing NOS1 and NOS3 translocation to actin cytoskeleton and inhibiting their enzymatic activity. This Homo sapiens (Human) protein is Nitric oxide synthase-interacting protein (NOSIP).